We begin with the raw amino-acid sequence, 921 residues long: Isoleucine--tRNA ligase (921 aa).

A 'HIGH' region motif is present at residues 59–69; sequence PYANGHLHIGH. Glu569 contributes to the L-isoleucyl-5'-AMP binding site. The 'KMSKS' region motif lies at 610–614; it reads KMSKS. Lys613 is an ATP binding site. Residues Cys894, Cys897, Cys909, and Cys912 each coordinate Zn(2+).

The protein belongs to the class-I aminoacyl-tRNA synthetase family. IleS type 1 subfamily. Monomer. It depends on Zn(2+) as a cofactor.

The protein localises to the cytoplasm. It catalyses the reaction tRNA(Ile) + L-isoleucine + ATP = L-isoleucyl-tRNA(Ile) + AMP + diphosphate. Catalyzes the attachment of isoleucine to tRNA(Ile). As IleRS can inadvertently accommodate and process structurally similar amino acids such as valine, to avoid such errors it has two additional distinct tRNA(Ile)-dependent editing activities. One activity is designated as 'pretransfer' editing and involves the hydrolysis of activated Val-AMP. The other activity is designated 'posttransfer' editing and involves deacylation of mischarged Val-tRNA(Ile). The chain is Isoleucine--tRNA ligase from Campylobacter lari (strain RM2100 / D67 / ATCC BAA-1060).